A 160-amino-acid polypeptide reads, in one-letter code: Ribosome maturation factor RimP (160 aa).

It belongs to the RimP family.

It is found in the cytoplasm. Its function is as follows. Required for maturation of 30S ribosomal subunits. The sequence is that of Ribosome maturation factor RimP from Citrifermentans bemidjiense (strain ATCC BAA-1014 / DSM 16622 / JCM 12645 / Bem) (Geobacter bemidjiensis).